The following is an 878-amino-acid chain: MSNERYNARESEPKWQAKWDEAKIFATRNDDPRPKYYVLEMFPYPSGRIHMGHVRNYTMGDVVARTMRARGHNVLHPMGWDAFGLPAENAAIERKVAPKAWTYANIAAMKKQLQTMGLSLDWAREFATCDPTYYKHQQKMFLDFLKAGLAERETRKLNWDPVDMTVLANEQVIDGRGWRSGAVVEQREMNQWVFKITRYAQELLDALETLDRWPDKVRLMQRNWIGRSEGLLVRFALDSATTPAGETELKIFTTRPDTLFGAKFMAIAADHPLAQAAAAKDPKIAAFVEDCKKRGTAQAEIDTAEKLGIDTGIRALHPFDPNWQIPVYVANFVLMEYGTGAIFGCPAHDQRDLDFVNKYQLGNTPVVCPEGQDPSSFVITDEAYDGDGRLINSRFLDGMSIAEAKEDVAKRLETATLGNAPVGERKVNFRLRDWGISRQRYWGCPIPVIHCEVCGVVPVPDKDLPVVLPEDVSFDKPGNALDHHPTWKHTACPQCGAKATRETDTMDTFVDSSWYFARFTDPWNENAPTTPDVVNRMLPVDQYIGGVEHAILHLLYSRFFTRAMKATGHVGLDEPFRGMFTQGMVVHETYRKADGMFASPAEVAIVAEGDGRRATLLDDGTPIEIGPIEKMSKSKRNTVDPDDIIGSYGADTARWFMLSDSPPDRDVIWSEEGVKGASRFVQRLWRMINDAAEIAKAAPAARPDAFGPEALAVRKAAHGALDKVLSGIERLAFNVSLAHIREFSNSLGEALARPGAASPDVAPDLAWAIREGAVILVQLFHPMMPHLAEECWAALGQPGLVSEALWPQIERDLLLEDSITLPVQVNGKKRGEVTVARDANNPEIEAAVLALDAVRQALDGKPVRKVIVVPQRIVNVVG.

Positions 43-53 (PYPSGRIHMGH) match the 'HIGH' region motif. The 'KMSKS' region signature appears at 630 to 634 (KMSKS). K633 serves as a coordination point for ATP.

It belongs to the class-I aminoacyl-tRNA synthetase family.

It is found in the cytoplasm. It catalyses the reaction tRNA(Leu) + L-leucine + ATP = L-leucyl-tRNA(Leu) + AMP + diphosphate. This is Leucine--tRNA ligase from Rhodopseudomonas palustris (strain BisB5).